Consider the following 274-residue polypeptide: Methionine-binding lipoprotein MetQ (274 aa).

A signal peptide spans Met-1 to Ala-19. Cys-20 is lipidated: N-palmitoyl cysteine. The S-diacylglycerol cysteine moiety is linked to residue Cys-20.

This sequence belongs to the NlpA lipoprotein family. The complex is composed of two ATP-binding proteins (MetN), two transmembrane proteins (MetP) and a solute-binding protein (metQ).

It is found in the cell membrane. Functionally, part of the ABC transporter complex MetNPQ involved in methionine import. Binds the methionine and transfers it to the membrane-bound permease. It has also been shown to be involved in methionine sulfoxide transport. This Bacillus subtilis (strain 168) protein is Methionine-binding lipoprotein MetQ (metQ).